Reading from the N-terminus, the 135-residue chain is Aspartate 1-decarboxylase (135 aa).

Catalysis depends on serine 25, which acts as the Schiff-base intermediate with substrate; via pyruvic acid. A Pyruvic acid (Ser) modification is found at serine 25. Residue threonine 57 participates in substrate binding. Tyrosine 58 functions as the Proton donor in the catalytic mechanism. 73–75 (GSA) contributes to the substrate binding site.

Belongs to the PanD family. In terms of assembly, heterooctamer of four alpha and four beta subunits. The cofactor is pyruvate. Post-translationally, is synthesized initially as an inactive proenzyme, which is activated by self-cleavage at a specific serine bond to produce a beta-subunit with a hydroxyl group at its C-terminus and an alpha-subunit with a pyruvoyl group at its N-terminus.

The protein resides in the cytoplasm. The enzyme catalyses L-aspartate + H(+) = beta-alanine + CO2. The protein operates within cofactor biosynthesis; (R)-pantothenate biosynthesis; beta-alanine from L-aspartate: step 1/1. Its function is as follows. Catalyzes the pyruvoyl-dependent decarboxylation of aspartate to produce beta-alanine. This Albidiferax ferrireducens (strain ATCC BAA-621 / DSM 15236 / T118) (Rhodoferax ferrireducens) protein is Aspartate 1-decarboxylase.